We begin with the raw amino-acid sequence, 971 residues long: MATVRASLRGALLLLLAVAGVAEVAGGLAPGSAGALCCNHSKDNQMCRDVCEQIFSSKSESRLKHLLQRAPDYCPETMVEIWNCMNSSLPGVFKKSDGWVGLGCCELAIALECRQACKQASSKNDISKVCRKEYENALFSCISRNEMGSVCCSYAGHHTNCREYCQAIFRTDSSPGPSQIKAVENYCASISPQLIHCVNNYTQSYPMRNPTDSLYCCDRAEDHACQNACKRILMSKKTEMEIVDGLIEGCKTQPLPQDPLWQCFLESSQSVHPGVTVHPPPSTGLDGAKLHCCSKANTSTCRELCTKLYSMSWGNTQSWQEFDRFCEYNPVEVSMLTCLADVREPCQLGCRNLTYCTNFNNRPTELFRSCNAQSDQGAMNDMKLWEKGSIKMPFINIPVLDIKKCQPEMWKAIACSLQIKPCHSKSRGSIICKSDCVEILKKCGDQNKFPEDHTAESICELLSPTDDLKNCIPLDTYLRPSTLGNIVEEVTHPCNPNPCPANELCEVNRKGCPSGDPCLPYFCVQGCKLGEASDFIVRQGTLIQVPSSAGEVGCYKICSCGQSGLLENCMEMHCIDLQKSCIVGGKRKSHGTSFSIDCNVCSCFAGNLVCSTRLCLSEHSSEDDRRTFTGLPCNCADQFVPVCGQNGRTYPSACIARCVGLQDHQFEFGSCMSKDPCNPNPCQKNQRCIPKPQVCLTTFDKFGCSQYECVPRQLACDQVQDPVCDTDHMEHNNLCTLYQRGKSLSYKGPCQPFCRATEPVCGHNGETYSSVCAAYSDRVAVDYYGDCQAVGVLSEHSSVAECASVKCPSLLAAGCKPIIPPGACCPLCAGMLRVLFDKEKLDTIAKVTNKKPITVLEILQKIRMHVSVPQCDVFGYFSIESEIVILIIPVDHYPKALQIEACNKEAEKIESLINSDSPTLASHVPLSALIISQVQVSSSVPSAGVRARPSCHSLLLPLSLGLALHLLWTYN.

The signal sequence occupies residues 1–22 (MATVRASLRGALLLLLAVAGVA). Residues 37–84 (CCNHSKDNQMCRDVCEQIFSSKSESRLKHLLQRAPDYCPETMVEIWNC) form a Knot 1 repeat. The segment at 37 to 338 (CCNHSKDNQM…NPVEVSMLTC (302 aa)) is 5 X Knot repeats. Asparagine 39 and asparagine 86 each carry an N-linked (GlcNAc...) asparagine glycan. Knot repeat units follow at residues 104-141 (CCELAIALECRQACKQASSKNDISKVCRKEYENALFSC) and 151-197 (CCSY…LIHC). Asparagine 200 carries an N-linked (GlcNAc...) asparagine glycan. Knot repeat units follow at residues 216 to 263 (CCDR…LWQC) and 292 to 338 (CCSK…MLTC). Residues asparagine 297 and asparagine 352 are each glycosylated (N-linked (GlcNAc...) asparagine). 3 consecutive Kazal-like domains span residues 627 to 673 (TFTG…SCMS), 698 to 752 (TFDK…PCQP), and 753 to 789 (FCRATEPVCGHNGETYSSVCAAYSDRVAVDYYGDCQA). Disulfide bonds link cysteine 633–cysteine 658, cysteine 635–cysteine 654, cysteine 643–cysteine 671, cysteine 716–cysteine 735, cysteine 724–cysteine 750, and cysteine 761–cysteine 787. A lipid anchor (GPI-anchor amidated serine) is attached at serine 942. Residues 943–971 (AGVRARPSCHSLLLPLSLGLALHLLWTYN) constitute a propeptide, removed in mature form.

This sequence belongs to the RECK family. Interacts (via knot repeats) with WNT7A (via disordered linker region); the interaction is direct. Interacts (via knot repeats) with WNT7B (via disordered linker region); the interaction is direct. Interacts with ADGRA2; the interaction is direct. Interacts with MMP9. In terms of processing, N-glycosylated. In terms of tissue distribution, expressed in various tissues and untransformed cells. It is undetectable in tumor-derived cell lines and oncogenically transformed cells.

It is found in the cell membrane. Functionally, functions together with ADGRA2 to enable brain endothelial cells to selectively respond to Wnt7 signals (WNT7A or WNT7B). Plays a key role in Wnt7-specific responses: required for central nervous system (CNS) angiogenesis and blood-brain barrier regulation. Acts as a Wnt7-specific coactivator of canonical Wnt signaling by decoding Wnt ligands: acts by interacting specifically with the disordered linker region of Wnt7, thereby conferring ligand selectivity for Wnt7. ADGRA2 is then required to deliver RECK-bound Wnt7 to frizzled by assembling a higher-order RECK-ADGRA2-Fzd-LRP5-LRP6 complex. Also acts as a serine protease inhibitor: negatively regulates matrix metalloproteinase-9 (MMP9) by suppressing MMP9 secretion and by direct inhibition of its enzymatic activity. Also inhibits metalloproteinase activity of MMP2 and MMP14 (MT1-MMP). This Homo sapiens (Human) protein is Reversion-inducing cysteine-rich protein with Kazal motifs.